The chain runs to 410 residues: 2-oxoglutarate-dependent dioxygenase AOP3 (410 aa).

The region spanning 258–355 (GNASVGAKEA…RYAAALFSYP (98 aa)) is the Fe2OG dioxygenase domain. Residues His278, Asp280, and His335 each contribute to the Fe cation site. Arg346 is a binding site for 2-oxoglutarate.

The protein belongs to the iron/ascorbate-dependent oxidoreductase family. The cofactor is Fe(2+).

Functionally, 2-oxoglutarate-dependent dioxygenase involved in glucosinolates biosynthesis. Catalyzes the conversion of methylsulfinylalkyl glucosinolates to hydroxyalkyl glucosinolates. The chain is 2-oxoglutarate-dependent dioxygenase AOP3 (AOP3) from Arabidopsis thaliana (Mouse-ear cress).